Reading from the N-terminus, the 87-residue chain is Large ribosomal subunit protein bL27 (87 aa).

The interval Met1–Tyr20 is disordered.

This sequence belongs to the bacterial ribosomal protein bL27 family.

This is Large ribosomal subunit protein bL27 (rpmA) from Treponema pallidum (strain Nichols).